Reading from the N-terminus, the 427-residue chain is Probable threonylcarbamoyladenosine tRNA methylthiotransferase (427 aa).

The region spanning 12-118 (MRVYVEGYGC…AGEILKNYVE (107 aa)) is the MTTase N-terminal domain. Residues cysteine 21, cysteine 57, cysteine 86, cysteine 155, cysteine 159, and cysteine 162 each contribute to the [4Fe-4S] cluster site. The 230-residue stretch at 141–370 (LKPSLITPLP…DKLRRELSYL (230 aa)) folds into the Radical SAM core domain. The 55-residue stretch at 373–427 (KKYIGKAMKVLVLDEGKGYTDNFKVVKFEGGEVGEFRKVKITDAKTFGLKGELIL) folds into the TRAM domain.

The protein belongs to the methylthiotransferase family. CDKAL1 subfamily. Requires [4Fe-4S] cluster as cofactor.

The enzyme catalyses N(6)-L-threonylcarbamoyladenosine(37) in tRNA + (sulfur carrier)-SH + AH2 + 2 S-adenosyl-L-methionine = 2-methylsulfanyl-N(6)-L-threonylcarbamoyladenosine(37) in tRNA + (sulfur carrier)-H + 5'-deoxyadenosine + L-methionine + A + S-adenosyl-L-homocysteine + 2 H(+). Its function is as follows. Catalyzes the methylthiolation of N6-threonylcarbamoyladenosine (t(6)A), leading to the formation of 2-methylthio-N6-threonylcarbamoyladenosine (ms(2)t(6)A) at position 37 in tRNAs that read codons beginning with adenine. In Methanocaldococcus jannaschii (strain ATCC 43067 / DSM 2661 / JAL-1 / JCM 10045 / NBRC 100440) (Methanococcus jannaschii), this protein is Probable threonylcarbamoyladenosine tRNA methylthiotransferase.